A 212-amino-acid chain; its full sequence is MNASPQRRIGLYGGSFDPPHMGHLVLAMTAVQHLKLDELRWIPAGVAWQKERTLLSATHRAGMVKAAITGHRGFKLDRREIERNGPSYTIDTVRESQLAEPNAKWFLVIGQDQYERLPTWHEWRELITRVTLAVAGRDGKSPSPPSELLAVWHRIEALPMPPMNVSSTAIRAHLAAGGTAQSLVPDMVPTVVARYIDRYHLYAPPRGGVPAA.

The protein belongs to the NadD family.

It carries out the reaction nicotinate beta-D-ribonucleotide + ATP + H(+) = deamido-NAD(+) + diphosphate. The protein operates within cofactor biosynthesis; NAD(+) biosynthesis; deamido-NAD(+) from nicotinate D-ribonucleotide: step 1/1. Catalyzes the reversible adenylation of nicotinate mononucleotide (NaMN) to nicotinic acid adenine dinucleotide (NaAD). This chain is Probable nicotinate-nucleotide adenylyltransferase, found in Methylibium petroleiphilum (strain ATCC BAA-1232 / LMG 22953 / PM1).